A 226-amino-acid polypeptide reads, in one-letter code: MALSDEQVKSELSKMQAFIEKEAKEKAKEIKLKADEEYEIEKASIVRSETAAIDSTYEQKLKKASLAQQITKSTIGNKTRLRILSTKDEVLHEIFDEAEAELKKITKDKKQYKPVLVGLIEEGVLALMEPKVSIKVREQDVDVAKEAITEAAKNFEEKAKFKVEISIDDKNFLAKDIAGGIVVVNGSGKIEVDNTLEERLKILSEEALPAIRLELFGPSTTRKFFD.

Belongs to the V-ATPase E subunit family. V-ATPase is a heteromultimeric enzyme composed of a peripheral catalytic V1 complex (components A to H) attached to an integral membrane V0 proton pore complex (components: a, c, c', c'', d, e, f and VOA1).

It localises to the vacuole membrane. In terms of biological role, subunit of the V1 complex of vacuolar(H+)-ATPase (V-ATPase), a multisubunit enzyme composed of a peripheral complex (V1) that hydrolyzes ATP and a membrane integral complex (V0) that translocates protons. V-ATPase is responsible for acidifying and maintaining the pH of intracellular compartments. The sequence is that of V-type proton ATPase subunit E (VMA4) from Candida albicans (Yeast).